A 327-amino-acid polypeptide reads, in one-letter code: Spermidine/putrescine import ATP-binding protein PotA (327 aa).

Residues 5–235 (IKVEAVEKHF…PKTLFVATFI (231 aa)) form the ABC transporter domain. Residue 37 to 44 (GPSGCGKT) coordinates ATP.

The protein belongs to the ABC transporter superfamily. Spermidine/putrescine importer (TC 3.A.1.11.1) family. As to quaternary structure, the complex is composed of two ATP-binding proteins (PotA), two transmembrane proteins (PotB and PotC) and a solute-binding protein (PotD).

Its subcellular location is the cell membrane. The enzyme catalyses ATP + H2O + polyamine-[polyamine-binding protein]Side 1 = ADP + phosphate + polyamineSide 2 + [polyamine-binding protein]Side 1.. Its function is as follows. Part of the ABC transporter complex PotABCD involved in spermidine/putrescine import. Responsible for energy coupling to the transport system. The polypeptide is Spermidine/putrescine import ATP-binding protein PotA (Bacillus cereus (strain ATCC 14579 / DSM 31 / CCUG 7414 / JCM 2152 / NBRC 15305 / NCIMB 9373 / NCTC 2599 / NRRL B-3711)).